The primary structure comprises 293 residues: 4-diphosphocytidyl-2-C-methyl-D-erythritol kinase (293 aa).

Lys16 is an active-site residue. 99–109 contacts ATP; sequence PMGAGLGGGSS. Residue Asp141 is part of the active site.

This sequence belongs to the GHMP kinase family. IspE subfamily.

It catalyses the reaction 4-CDP-2-C-methyl-D-erythritol + ATP = 4-CDP-2-C-methyl-D-erythritol 2-phosphate + ADP + H(+). The protein operates within isoprenoid biosynthesis; isopentenyl diphosphate biosynthesis via DXP pathway; isopentenyl diphosphate from 1-deoxy-D-xylulose 5-phosphate: step 3/6. Catalyzes the phosphorylation of the position 2 hydroxy group of 4-diphosphocytidyl-2C-methyl-D-erythritol. This chain is 4-diphosphocytidyl-2-C-methyl-D-erythritol kinase, found in Paraburkholderia xenovorans (strain LB400).